The sequence spans 72 residues: Translation initiation factor IF-1 (72 aa).

Residues methionine 1–lysine 72 enclose the S1-like domain.

Belongs to the IF-1 family. As to quaternary structure, component of the 30S ribosomal translation pre-initiation complex which assembles on the 30S ribosome in the order IF-2 and IF-3, IF-1 and N-formylmethionyl-tRNA(fMet); mRNA recruitment can occur at any time during PIC assembly.

Its subcellular location is the cytoplasm. Functionally, one of the essential components for the initiation of protein synthesis. Stabilizes the binding of IF-2 and IF-3 on the 30S subunit to which N-formylmethionyl-tRNA(fMet) subsequently binds. Helps modulate mRNA selection, yielding the 30S pre-initiation complex (PIC). Upon addition of the 50S ribosomal subunit IF-1, IF-2 and IF-3 are released leaving the mature 70S translation initiation complex. This chain is Translation initiation factor IF-1, found in Dinoroseobacter shibae (strain DSM 16493 / NCIMB 14021 / DFL 12).